We begin with the raw amino-acid sequence, 127 residues long: Large ribosomal subunit protein bL17 (127 aa).

This sequence belongs to the bacterial ribosomal protein bL17 family. As to quaternary structure, part of the 50S ribosomal subunit. Contacts protein L32.

This is Large ribosomal subunit protein bL17 from Haemophilus ducreyi (strain 35000HP / ATCC 700724).